A 171-amino-acid chain; its full sequence is Actin-related protein 2/3 complex subunit 4 (171 aa).

This sequence belongs to the ARPC4 family. As to quaternary structure, component of the Arp2/3 complex composed of ARP2, ARP3, ARC40/p41-ARC, ARC35/p34-ARC, ARC18/p21-ARC, ARC19/p20-ARC and ARC16/p16-ARC.

Its subcellular location is the cytoplasm. The protein localises to the cytoskeleton. It localises to the actin patch. Functionally, functions as actin-binding component of the Arp2/3 complex which is involved in regulation of actin polymerization and together with an activating nucleation-promoting factor (NPF) mediates the formation of branched actin networks. Seems to contact the mother actin filament. This Saccharomyces cerevisiae (strain ATCC 204508 / S288c) (Baker's yeast) protein is Actin-related protein 2/3 complex subunit 4 (ARC19).